We begin with the raw amino-acid sequence, 211 residues long: ATP-dependent Clp protease proteolytic subunit (211 aa).

Serine 107 (nucleophile) is an active-site residue. Histidine 132 is a catalytic residue.

This sequence belongs to the peptidase S14 family. As to quaternary structure, fourteen ClpP subunits assemble into 2 heptameric rings which stack back to back to give a disk-like structure with a central cavity, resembling the structure of eukaryotic proteasomes.

The protein localises to the cytoplasm. The catalysed reaction is Hydrolysis of proteins to small peptides in the presence of ATP and magnesium. alpha-casein is the usual test substrate. In the absence of ATP, only oligopeptides shorter than five residues are hydrolyzed (such as succinyl-Leu-Tyr-|-NHMec, and Leu-Tyr-Leu-|-Tyr-Trp, in which cleavage of the -Tyr-|-Leu- and -Tyr-|-Trp bonds also occurs).. Functionally, cleaves peptides in various proteins in a process that requires ATP hydrolysis. Has a chymotrypsin-like activity. Plays a major role in the degradation of misfolded proteins. The protein is ATP-dependent Clp protease proteolytic subunit of Xanthobacter autotrophicus (strain ATCC BAA-1158 / Py2).